We begin with the raw amino-acid sequence, 465 residues long: Argininosuccinate lyase (465 aa).

This sequence belongs to the lyase 1 family. Argininosuccinate lyase subfamily.

The protein localises to the cytoplasm. The catalysed reaction is 2-(N(omega)-L-arginino)succinate = fumarate + L-arginine. Its pathway is amino-acid biosynthesis; L-arginine biosynthesis; L-arginine from L-ornithine and carbamoyl phosphate: step 3/3. The protein is Argininosuccinate lyase of Methanosphaera stadtmanae (strain ATCC 43021 / DSM 3091 / JCM 11832 / MCB-3).